We begin with the raw amino-acid sequence, 21 residues long: Peptide PGLa-R2 (21 aa).

Leu-21 is modified (leucine amide).

As to expression, expressed by the skin glands.

It is found in the secreted. Functionally, antimicrobial peptide. This Xenopus ruwenzoriensis (Uganda clawed frog) protein is Peptide PGLa-R2.